Consider the following 662-residue polypeptide: DCC-interacting protein 13-beta (662 aa).

A required for RAB5A binding region spans residues M1–V428. In terms of domain architecture, BAR spans A3 to V268. Residues L277 to R375 enclose the PH domain. Positions S486–D635 constitute a PID domain. The tract at residues N642 to A662 is disordered.

Homodimer. Homotetramer. Binds RAB5A/Rab5 through an N-terminal domain. This interaction is essential for its recruitment to endosomal membranes as well as its role in cell proliferation. Binds subunits of the NuRD/MeCP1 complex. Interacts with FSHR; interaction is independent of follicle stimulating hormone stimulation. Interacts with APPL1; the interaction is decreased by adiponectin in a time-dependent manner. Forms a complex comprising APPL1, RUVBL2, CTNNB1, HDAC1 and HDAC2; interaction reduces interaction between CTNNB1, HDAC1, HDAC2 and RUVBL2 leading to the decrease of deacetylase activity of this complex; affects the recruitment of repressive complexes to the Wnt target genes. Interacts (via BAR domain) with TBC1D1; interaction is dependent of TBC1D1 phosphorylation at 'Ser-235'; interaction diminishes the phosphorylation of TBC1D1 at 'Thr-596', resulting in inhibition of SLC2A4 translocation and glucose uptake. Interacts with ANXA2; targets APPL2 to endosomes and acting in parallel to RAB5A. Interacts with RAB31 (in GTP-bound form); interaction contributes to or enhances recruitment of APPL2 to the phagosomes; interaction enhances Fc-gamma receptor-mediated phagocytosis through PI3K/Akt signaling in macrophages. Interacts with PIK3R1; forms a complex with PIK3R1 and APPL1. Interacts (via BAR domain) with ADIPOR1; hinders the accessibility of APPL1 to ADIPOR1; negatively regulates adiponectin signaling; ADIPOQ dissociates this interaction and facilitates the recruitment of APPL1 to ADIPOR1. Interacts (via BAR domain) with ADIPOR2; ADIPOQ dissociates this interaction. In terms of tissue distribution, expressed in insulin-target tissues including skeletal muscle, liver, fat, and brain. Highly expressed in kidney and pancreas. Abundantly expressed in the ventromedial hypothalamus (VMH), barely detectable in the arcuate nucleus (ARC) and paraventricular nucleus (PVN) of the hypothalamus. Also expressed in pancreatic beta-cells.

It localises to the early endosome membrane. Its subcellular location is the nucleus. The protein resides in the cell membrane. It is found in the endosome membrane. The protein localises to the cytoplasm. It localises to the cytoplasmic vesicle. Its subcellular location is the phagosome. The protein resides in the cell projection. It is found in the ruffle. The protein localises to the ruffle membrane. It localises to the phagosome membrane. Functionally, multifunctional adapter protein that binds to various membrane receptors, nuclear factors and signaling proteins to regulate many processes, such as cell proliferation, immune response, endosomal trafficking and cell metabolism. Regulates signaling pathway leading to cell proliferation through interaction with RAB5A and subunits of the NuRD/MeCP1 complex. Plays a role in immune response by modulating phagocytosis, inflammatory and innate immune responses. In macrophages, enhances Fc-gamma receptor-mediated phagocytosis through interaction with RAB31 leading to activation of PI3K/Akt signaling. In response to LPS, modulates inflammatory responses by playing a key role on the regulation of TLR4 signaling and in the nuclear translocation of RELA/NF-kappa-B p65 and the secretion of pro- and anti-inflammatory cytokines. Also functions as a negative regulator of innate immune response via inhibition of AKT1 signaling pathway by forming a complex with APPL1 and PIK3R1. Plays a role in endosomal trafficking of TGFBR1 from the endosomes to the nucleus. Plays a role in cell metabolism by regulating adiponectin and insulin signaling pathways and adaptative thermogenesis. In muscle, negatively regulates adiponectin-simulated glucose uptake and fatty acid oxidation by inhibiting adiponectin signaling pathway through APPL1 sequestration thereby antagonizing APPL1 action. In muscles, negatively regulates insulin-induced plasma membrane recruitment of GLUT4 and glucose uptake through interaction with TBC1D1. Plays a role in cold and diet-induced adaptive thermogenesis by activating ventromedial hypothalamus (VMH) neurons throught AMPK inhibition which enhances sympathetic outflow to subcutaneous white adipose tissue (sWAT), sWAT beiging and cold tolerance. Also plays a role in other signaling pathways namely Wnt/beta-catenin, HGF and glucocorticoid receptor signaling. Positive regulator of beta-catenin/TCF-dependent transcription through direct interaction with RUVBL2/reptin resulting in the relief of RUVBL2-mediated repression of beta-catenin/TCF target genes by modulating the interactions within the beta-catenin-reptin-HDAC complex. May affect adult neurogenesis in hippocampus and olfactory system via regulating the sensitivity of glucocorticoid receptor. Required for fibroblast migration through HGF cell signaling. The polypeptide is DCC-interacting protein 13-beta (Mus musculus (Mouse)).